The primary structure comprises 166 residues: Interferon gamma (166 aa).

An N-terminal signal peptide occupies residues 1-23 (MNYTSYILAFQLCVILGSSGCYC). Gln24 is modified (pyrrolidone carboxylic acid). N-linked (GlcNAc...) asparagine glycans are attached at residues Asn39 and Asn106.

It belongs to the type II (or gamma) interferon family. In terms of assembly, homodimer. Interacts with IFNGR1 (via extracellular domain); this interaction promotes IFNGR1 dimerization. In terms of tissue distribution, released primarily from activated T lymphocytes.

It localises to the secreted. Type II interferon produced by immune cells such as T-cells and NK cells that plays crucial roles in antimicrobial, antiviral, and antitumor responses by activating effector immune cells and enhancing antigen presentation. Primarily signals through the JAK-STAT pathway after interaction with its receptor IFNGR1 to affect gene regulation. Upon IFNG binding, IFNGR1 intracellular domain opens out to allow association of downstream signaling components JAK2, JAK1 and STAT1, leading to STAT1 activation, nuclear translocation and transcription of IFNG-regulated genes. Many of the induced genes are transcription factors such as IRF1 that are able to further drive regulation of a next wave of transcription. Plays a role in class I antigen presentation pathway by inducing a replacement of catalytic proteasome subunits with immunoproteasome subunits. In turn, increases the quantity, quality, and repertoire of peptides for class I MHC loading. Increases the efficiency of peptide generation also by inducing the expression of activator PA28 that associates with the proteasome and alters its proteolytic cleavage preference. Up-regulates as well MHC II complexes on the cell surface by promoting expression of several key molecules such as cathepsins B/CTSB, H/CTSH, and L/CTSL. Participates in the regulation of hematopoietic stem cells during development and under homeostatic conditions by affecting their development, quiescence, and differentiation. This Camelus bactrianus (Bactrian camel) protein is Interferon gamma (IFNG).